Reading from the N-terminus, the 177-residue chain is B-phycoerythrin beta chain (177 aa).

Cys50 and Cys61 together coordinate phycourobilin. Asn72 carries the N4-methylasparagine modification. 2 residues coordinate (2R,3E)-phycoerythrobilin: Cys82 and Cys158.

The protein belongs to the phycobiliprotein family. As to quaternary structure, heteromer of 6 alpha, 6 beta and one gamma chain. Post-translationally, contains two covalently linked phycoerythrobilin chromophores and one covalently linked phycourobilin chromophore.

It localises to the plastid. Its subcellular location is the chloroplast thylakoid membrane. In terms of biological role, light-harvesting photosynthetic bile pigment-protein from the phycobiliprotein complex. This Porphyridium purpureum (Red alga) protein is B-phycoerythrin beta chain (cpeB).